Consider the following 514-residue polypeptide: Glutamyl-tRNA(Gln) amidotransferase subunit B, mitochondrial (514 aa).

Belongs to the GatB/GatE family. GatB subfamily. Subunit of the heterotrimeric GatCAB amidotransferase (AdT) complex, composed of A, B and C subunits.

It is found in the mitochondrion. The catalysed reaction is L-glutamyl-tRNA(Gln) + L-glutamine + ATP + H2O = L-glutaminyl-tRNA(Gln) + L-glutamate + ADP + phosphate + H(+). Its function is as follows. Allows the formation of correctly charged Gln-tRNA(Gln) through the transamidation of misacylated Glu-tRNA(Gln) in the mitochondria. The reaction takes place in the presence of glutamine and ATP through an activated gamma-phospho-Glu-tRNA(Gln). This chain is Glutamyl-tRNA(Gln) amidotransferase subunit B, mitochondrial, found in Naegleria gruberi (Amoeba).